Consider the following 932-residue polypeptide: Isoleucine--tRNA ligase (932 aa).

The 'HIGH' region signature appears at 57 to 67 (PYANGDIHIGT). Residue Glu-559 participates in L-isoleucyl-5'-AMP binding. The 'KMSKS' region motif lies at 600–604 (KMSKS). Lys-603 is an ATP binding site. Positions 899, 902, 919, and 922 each coordinate Zn(2+).

This sequence belongs to the class-I aminoacyl-tRNA synthetase family. IleS type 1 subfamily. In terms of assembly, monomer. The cofactor is Zn(2+).

It localises to the cytoplasm. It carries out the reaction tRNA(Ile) + L-isoleucine + ATP = L-isoleucyl-tRNA(Ile) + AMP + diphosphate. Catalyzes the attachment of isoleucine to tRNA(Ile). As IleRS can inadvertently accommodate and process structurally similar amino acids such as valine, to avoid such errors it has two additional distinct tRNA(Ile)-dependent editing activities. One activity is designated as 'pretransfer' editing and involves the hydrolysis of activated Val-AMP. The other activity is designated 'posttransfer' editing and involves deacylation of mischarged Val-tRNA(Ile). This chain is Isoleucine--tRNA ligase, found in Caldanaerobacter subterraneus subsp. tengcongensis (strain DSM 15242 / JCM 11007 / NBRC 100824 / MB4) (Thermoanaerobacter tengcongensis).